Consider the following 425-residue polypeptide: Glucose-1-phosphate adenylyltransferase (425 aa).

Alpha-D-glucose 1-phosphate-binding positions include Tyr-114, Gly-179, 194 to 195, and Ser-212; that span reads EK.

This sequence belongs to the bacterial/plant glucose-1-phosphate adenylyltransferase family. As to quaternary structure, homotetramer.

It carries out the reaction alpha-D-glucose 1-phosphate + ATP + H(+) = ADP-alpha-D-glucose + diphosphate. It functions in the pathway glycan biosynthesis; glycogen biosynthesis. Functionally, involved in the biosynthesis of ADP-glucose, a building block required for the elongation reactions to produce glycogen. Catalyzes the reaction between ATP and alpha-D-glucose 1-phosphate (G1P) to produce pyrophosphate and ADP-Glc. This chain is Glucose-1-phosphate adenylyltransferase, found in Pectobacterium carotovorum subsp. carotovorum (strain PC1).